We begin with the raw amino-acid sequence, 65 residues long: Large ribosomal subunit protein uL29 (65 aa).

The protein belongs to the universal ribosomal protein uL29 family.

This chain is Large ribosomal subunit protein uL29, found in Delftia acidovorans (strain DSM 14801 / SPH-1).